The chain runs to 121 residues: Large ribosomal subunit protein uL14 (121 aa).

Belongs to the universal ribosomal protein uL14 family. In terms of assembly, part of the 50S ribosomal subunit. Forms a cluster with proteins L3 and L19. In the 70S ribosome, L14 and L19 interact and together make contacts with the 16S rRNA in bridges B5 and B8.

In terms of biological role, binds to 23S rRNA. Forms part of two intersubunit bridges in the 70S ribosome. The chain is Large ribosomal subunit protein uL14 from Aquifex aeolicus (strain VF5).